A 334-amino-acid polypeptide reads, in one-letter code: Chitin synthase export chaperone (334 aa).

The next 7 membrane-spanning stretches (helical) occupy residues 49–69 (IIFE…TVIM), 85–105 (ILSF…IDAG), 123–143 (GLSS…FQLY), 159–179 (LAAF…WAGL), 185–205 (VGLF…YVAM), 220–240 (LGDI…LYAF), and 244–264 (ICIA…CNLL).

The protein belongs to the CHS7 family.

The protein resides in the endoplasmic reticulum membrane. Functionally, chaperone required for the export of the chitin synthase chs3 from the endoplasmic reticulum. Plays a critical role in cell wall integrity and virulence. The chain is Chitin synthase export chaperone from Fusarium oxysporum f. sp. lycopersici (strain 4287 / CBS 123668 / FGSC 9935 / NRRL 34936) (Fusarium vascular wilt of tomato).